A 297-amino-acid polypeptide reads, in one-letter code: GTP cyclohydrolase FolE2 (297 aa).

Disordered stretches follow at residues 1–21 (MTHA…SERD) and 180–207 (IRAE…RERP).

The protein belongs to the GTP cyclohydrolase IV family.

The catalysed reaction is GTP + H2O = 7,8-dihydroneopterin 3'-triphosphate + formate + H(+). Its pathway is cofactor biosynthesis; 7,8-dihydroneopterin triphosphate biosynthesis; 7,8-dihydroneopterin triphosphate from GTP: step 1/1. Converts GTP to 7,8-dihydroneopterin triphosphate. In Methylibium petroleiphilum (strain ATCC BAA-1232 / LMG 22953 / PM1), this protein is GTP cyclohydrolase FolE2.